Reading from the N-terminus, the 334-residue chain is 4-hydroxyproline 2-epimerase (334 aa).

The active-site Proton acceptor is Cys90. Substrate contacts are provided by residues 91–92, His223, and Asp249; that span reads GH. Cys253 functions as the Proton donor in the catalytic mechanism. 254-255 contributes to the substrate binding site; sequence GT.

The protein belongs to the proline racemase family. In terms of assembly, homodimer.

The catalysed reaction is trans-4-hydroxy-L-proline = cis-4-hydroxy-D-proline. In terms of biological role, catalyzes the epimerization of trans-4-hydroxy-L-proline (t4LHyp) to cis-4-hydroxy-D-proline (c4DHyp). Is likely involved in a degradation pathway that converts t4LHyp to alpha-ketoglutarate, which would allow P.denitrificans to grow on t4LHyp as a sole carbon source. Also seems to be involved in an alternative catabolic pathway that degrades trans-4-hydroxy-L-proline betaine (tHyp-B) to alpha-ketoglutarate; this pathway would permit the utilization of tHyp-B as a sole carbon and nitrogen source. In Paracoccus denitrificans (strain Pd 1222), this protein is 4-hydroxyproline 2-epimerase (hypF).